The primary structure comprises 89 residues: uncharacterized protein (89 aa).

Composition is skewed to basic residues over residues 1 to 17 (MPPH…HGHH) and 65 to 89 (HHGH…HGHH). 2 disordered regions span residues 1-25 (MPPH…ITPV) and 60-89 (LETG…HGHH).

This is an uncharacterized protein from Dictyostelium discoideum (Social amoeba).